The chain runs to 846 residues: Vinculin (846 aa).

The interaction with TLN stretch occupies residues 1-257 (MPVKFHTKTL…VLQLTTTFEE (257 aa)). A coiled-coil region spans residues 315-370 (RAKLLAAADELDQILKELEELQAKGLGDSRQARALAHAAAVKLQELEQEIRKALAE). Residues 617–646 (WVPPRPPLPELEEEEEPPELPPPPEDPASL) are disordered.

The protein belongs to the vinculin/alpha-catenin family. In terms of assembly, monomer. Interacts with TLN (talin); the interaction facilitates VIN1 binding to F-actin. As to expression, expressed in epithelial tissues, specifically the pinacoderm (outer epithelium) and choanoderm (feeding epithelium) (at protein level). Also detected in migratory cells of the mesohyl (at protein level).

It localises to the cytoplasm. It is found in the cell cortex. The protein localises to the cell projection. The protein resides in the filopodium. Its subcellular location is the cytoskeleton. Actin filament (F-actin)-binding protein which may play a role in cell-cell adhesion. This chain is Vinculin, found in Oscarella pearsei (Sponge).